Consider the following 159-residue polypeptide: 3-hydroxyacyl-[acyl-carrier-protein] dehydratase FabZ (159 aa).

The active site involves histidine 62.

Belongs to the thioester dehydratase family. FabZ subfamily.

Its subcellular location is the cytoplasm. It catalyses the reaction a (3R)-hydroxyacyl-[ACP] = a (2E)-enoyl-[ACP] + H2O. In terms of biological role, involved in unsaturated fatty acids biosynthesis. Catalyzes the dehydration of short chain beta-hydroxyacyl-ACPs and long chain saturated and unsaturated beta-hydroxyacyl-ACPs. This chain is 3-hydroxyacyl-[acyl-carrier-protein] dehydratase FabZ, found in Methylobacterium nodulans (strain LMG 21967 / CNCM I-2342 / ORS 2060).